The primary structure comprises 613 residues: Autophagy-related protein 22-2 (613 aa).

Residues 1–28 form a disordered region; it reads MVLNSTPPASPGAEAQQRPPRYPGEDTA. The helical transmembrane segment at 41–61 threads the bilayer; it reads YGIAAEVFAVCGVGSFLPLTL. The segment covering 80-96 has biased composition (polar residues); sequence GSSSPSTAPGNGTTTAT. Positions 80-99 are disordered; the sequence is GSSSPSTAPGNGTTTATLRR. A glycan (N-linked (GlcNAc...) asparagine) is linked at Asn-90. 3 helical membrane-spanning segments follow: residues 120–140, 155–177, and 189–209; these read SFAMYTFSLAVLVQALTLISF, LAFGFIGSMTSMLFIFIAPPVYI, and CLGSSFVVLNSFLPVLVANDP. The tract at residues 216–257 is disordered; the sequence is KEEGEELSPVNSSGEFARSEDLDEENVRDSDDHFTTGHGLKT. N-linked (GlcNAc...) asparagine glycosylation is present at Asn-226. The span at 232–250 shows a compositional bias: basic and acidic residues; that stretch reads ARSEDLDEENVRDSDDHFT. 4 consecutive transmembrane segments (helical) span residues 278–298, 307–327, 382–402, and 418–438; these read VGLGYCAAVLVQILSILMLFA, ISGTLPMRFVLLLVGIWWFSF, VIVFLIAWFLLSDAMATVSGT, and VGLLSITATLSGMAGAFLWPV. The N-linked (GlcNAc...) asparagine glycan is linked to Asn-448. A run of 4 helical transmembrane segments spans residues 453–473, 488–510, 522–544, and 553–573; these read LCIALFEVIPLYGMLAYIPLF, FPLGIVHGLVSGGLSSYCRSFFG, YALYAATDKGSSFIGPAIVGMLI, and GFFFIAVLILLPIPLIWMVNA. The tract at residues 592-613 is disordered; it reads GEHASEYGGPSEEAEGLLARDI.

It belongs to the ATG22 family.

It localises to the vacuole membrane. Vacuolar effluxer which mediate the efflux of amino acids resulting from autophagic degradation. The release of autophagic amino acids allows the maintenance of protein synthesis and viability during nitrogen starvation. The protein is Autophagy-related protein 22-2 (atg22-2) of Neosartorya fischeri (strain ATCC 1020 / DSM 3700 / CBS 544.65 / FGSC A1164 / JCM 1740 / NRRL 181 / WB 181) (Aspergillus fischerianus).